We begin with the raw amino-acid sequence, 123 residues long: WAP four-disulfide core domain protein 2 (123 aa).

The signal sequence occupies residues 1 to 26 (MPACRLGLLVASLLLGLLLGLPPVTG). 2 consecutive WAP domains span residues 28 to 69 (GAEK…VTIC) and 72 to 122 (PNEK…VTPV). Disulfide bonds link cysteine 35/cysteine 61, cysteine 44/cysteine 65, cysteine 48/cysteine 60, cysteine 54/cysteine 69, cysteine 79/cysteine 109, cysteine 92/cysteine 113, cysteine 96/cysteine 108, and cysteine 102/cysteine 118.

As to quaternary structure, homotrimer; disulfide-linked. As to expression, detected in the distal parts of the epididymis.

The protein localises to the secreted. In terms of biological role, broad range protease inhibitor. This chain is WAP four-disulfide core domain protein 2 (WFDC2), found in Sus scrofa (Pig).